We begin with the raw amino-acid sequence, 367 residues long: Queuine tRNA-ribosyltransferase (367 aa).

Asp-91 functions as the Proton acceptor in the catalytic mechanism. Residues 91–95 (DSGGF), Asp-145, Gln-188, and Gly-215 contribute to the substrate site. Catalysis depends on Asp-265, which acts as the Nucleophile. The segment at 270–274 (TRVAR) is RNA binding; important for wobble base 34 recognition. Zn(2+)-binding residues include Cys-303, Cys-305, Cys-308, and His-334.

It belongs to the queuine tRNA-ribosyltransferase family. Homodimer. Within each dimer, one monomer is responsible for RNA recognition and catalysis, while the other monomer binds to the replacement base PreQ1. Zn(2+) is required as a cofactor.

It carries out the reaction 7-aminomethyl-7-carbaguanine + guanosine(34) in tRNA = 7-aminomethyl-7-carbaguanosine(34) in tRNA + guanine. Its pathway is tRNA modification; tRNA-queuosine biosynthesis. In terms of biological role, catalyzes the base-exchange of a guanine (G) residue with the queuine precursor 7-aminomethyl-7-deazaguanine (PreQ1) at position 34 (anticodon wobble position) in tRNAs with GU(N) anticodons (tRNA-Asp, -Asn, -His and -Tyr). Catalysis occurs through a double-displacement mechanism. The nucleophile active site attacks the C1' of nucleotide 34 to detach the guanine base from the RNA, forming a covalent enzyme-RNA intermediate. The proton acceptor active site deprotonates the incoming PreQ1, allowing a nucleophilic attack on the C1' of the ribose to form the product. After dissociation, two additional enzymatic reactions on the tRNA convert PreQ1 to queuine (Q), resulting in the hypermodified nucleoside queuosine (7-(((4,5-cis-dihydroxy-2-cyclopenten-1-yl)amino)methyl)-7-deazaguanosine). In Thermosipho africanus (strain TCF52B), this protein is Queuine tRNA-ribosyltransferase.